The following is a 203-amino-acid chain: MDIFSWQLGLPSTLACLVFGYLLGSIPFGLILTRMAGLGDVRKIGSGNIGATNVLRTGNKKLAATTLLLDALKGTAAAAIASLWGVEAGMAAGLAAFLGHLFPVWLSFKGGKGVATYIGVLLGLVPVMVLLFAAAWLAVAKISRYSSLSALVATAIIPVALYATGNGKVALLFAVMTLIAWVKHRANIQRLMSGTESRIGEKG.

A run of 5 helical transmembrane segments spans residues 13 to 33 (TLAC…LILT), 66 to 86 (TLLL…LWGV), 88 to 108 (AGMA…WLSF), 118 to 138 (IGVL…AWLA), and 156 to 176 (IIPV…FAVM).

This sequence belongs to the PlsY family. In terms of assembly, probably interacts with PlsX.

The protein localises to the cell inner membrane. It catalyses the reaction an acyl phosphate + sn-glycerol 3-phosphate = a 1-acyl-sn-glycero-3-phosphate + phosphate. It participates in lipid metabolism; phospholipid metabolism. Its function is as follows. Catalyzes the transfer of an acyl group from acyl-phosphate (acyl-PO(4)) to glycerol-3-phosphate (G3P) to form lysophosphatidic acid (LPA). This enzyme utilizes acyl-phosphate as fatty acyl donor, but not acyl-CoA or acyl-ACP. The chain is Glycerol-3-phosphate acyltransferase from Sinorhizobium medicae (strain WSM419) (Ensifer medicae).